The primary structure comprises 259 residues: MVASSPETLISAAQKCLCSRKKRLSPSSCLEVTIHIIAVDLGVKPALLYDSNGASPDQLQLYLHSLQESSVVSNSLRIMSINDNTFIINPDIMKSHLGELLKSKSLPLIDVCSSRKRPVLCAFERSAEEMVRSFLEVFMNGLDLVVLEEELYKDWNLCTFFGILLGYPASYWFEQTQGFENCLSMTPLVVCTVWVRWQIHEIKQRCCLYSFSVPEELWSDVQSHIQRWTDHLRERFSKQTVLTDICFSRDTVTLPSVTL.

It belongs to the UPF0739 family.

This chain is UPF0739 protein C1orf74 homolog, found in Danio rerio (Zebrafish).